A 1568-amino-acid polypeptide reads, in one-letter code: Pentafunctional AROM polypeptide (1568 aa).

The interval 1-380 is 3-dehydroquinate synthase; that stretch reads MSQVEKVSIL…YQLKAHEVSK (380 aa). NAD(+) is bound by residues 43 to 45, 81 to 84, 112 to 114, and D117; these read DSN, ENNK, and GGV. R128 provides a ligand contact to 7-phospho-2-dehydro-3-deoxy-D-arabino-heptonate. NAD(+) is bound at residue 137–138; it reads TT. 7-phospho-2-dehydro-3-deoxy-D-arabino-heptonate contacts are provided by D144 and K150. Residue K159 participates in NAD(+) binding. 7-phospho-2-dehydro-3-deoxy-D-arabino-heptonate is bound at residue N160. NAD(+)-binding positions include 177–180 and N188; that span reads FLTT. E192 contributes to the Zn(2+) binding site. 7-phospho-2-dehydro-3-deoxy-D-arabino-heptonate contacts are provided by residues 192–195 and K244; that span reads EVVK. The active-site Proton acceptor; for 3-dehydroquinate synthase activity is E254. 7-phospho-2-dehydro-3-deoxy-D-arabino-heptonate is bound by residues 258–262 and H265; that span reads RNLLN. Residue H265 coordinates Zn(2+). The active-site Proton acceptor; for 3-dehydroquinate synthase activity is the H269. The 7-phospho-2-dehydro-3-deoxy-D-arabino-heptonate site is built by H281 and K352. H281 is a binding site for Zn(2+). The interval 393-842 is EPSP synthase; sequence VHPFQEETTP…WDVLHTKFGV (450 aa). The active-site For EPSP synthase activity is the C824. A shikimate kinase region spans residues 867–1056; the sequence is DKSIVVIGMR…VPKGRSFVLS (190 aa). Position 874–881 (874–881) interacts with ATP; the sequence is GMRAAGKS. Residues 1057–1267 form a 3-dehydroquinase region; sequence LACSDLNDIA…SGNGQLTVGE (211 aa). The tract at residues 1280–1568 is shikimate dehydrogenase; that stretch reads RRNFYIVGNP…VYEAVVDDNV (289 aa).

It in the N-terminal section; belongs to the sugar phosphate cyclases superfamily. Dehydroquinate synthase family. The protein in the 2nd section; belongs to the EPSP synthase family. In the 3rd section; belongs to the shikimate kinase family. This sequence in the 4th section; belongs to the type-I 3-dehydroquinase family. It in the C-terminal section; belongs to the shikimate dehydrogenase family. In terms of assembly, homodimer. Zn(2+) serves as cofactor.

Its subcellular location is the cytoplasm. The enzyme catalyses 7-phospho-2-dehydro-3-deoxy-D-arabino-heptonate = 3-dehydroquinate + phosphate. It catalyses the reaction 3-dehydroquinate = 3-dehydroshikimate + H2O. It carries out the reaction shikimate + NADP(+) = 3-dehydroshikimate + NADPH + H(+). The catalysed reaction is shikimate + ATP = 3-phosphoshikimate + ADP + H(+). The enzyme catalyses 3-phosphoshikimate + phosphoenolpyruvate = 5-O-(1-carboxyvinyl)-3-phosphoshikimate + phosphate. The protein operates within metabolic intermediate biosynthesis; chorismate biosynthesis; chorismate from D-erythrose 4-phosphate and phosphoenolpyruvate: step 2/7. It participates in metabolic intermediate biosynthesis; chorismate biosynthesis; chorismate from D-erythrose 4-phosphate and phosphoenolpyruvate: step 3/7. It functions in the pathway metabolic intermediate biosynthesis; chorismate biosynthesis; chorismate from D-erythrose 4-phosphate and phosphoenolpyruvate: step 4/7. Its pathway is metabolic intermediate biosynthesis; chorismate biosynthesis; chorismate from D-erythrose 4-phosphate and phosphoenolpyruvate: step 5/7. The protein operates within metabolic intermediate biosynthesis; chorismate biosynthesis; chorismate from D-erythrose 4-phosphate and phosphoenolpyruvate: step 6/7. Functionally, the AROM polypeptide catalyzes 5 consecutive enzymatic reactions in prechorismate polyaromatic amino acid biosynthesis. This Clavispora lusitaniae (strain ATCC 42720) (Yeast) protein is Pentafunctional AROM polypeptide.